A 380-amino-acid chain; its full sequence is Probable protein phosphatase 2C 2 (380 aa).

In terms of domain architecture, PPM-type phosphatase spans 122–376 (GYSVYCKRGK…DDISVMLIQL (255 aa)). Positions 158, 159, 321, and 367 each coordinate Mn(2+).

This sequence belongs to the PP2C family. It depends on Mg(2+) as a cofactor. Requires Mn(2+) as cofactor.

The enzyme catalyses O-phospho-L-seryl-[protein] + H2O = L-seryl-[protein] + phosphate. The catalysed reaction is O-phospho-L-threonyl-[protein] + H2O = L-threonyl-[protein] + phosphate. The sequence is that of Probable protein phosphatase 2C 2 from Arabidopsis thaliana (Mouse-ear cress).